Reading from the N-terminus, the 145-residue chain is D-aminoacyl-tRNA deacylase (145 aa).

The Gly-cisPro motif, important for rejection of L-amino acids signature appears at G137 to P138.

This sequence belongs to the DTD family. As to quaternary structure, homodimer.

It is found in the cytoplasm. It catalyses the reaction glycyl-tRNA(Ala) + H2O = tRNA(Ala) + glycine + H(+). The enzyme catalyses a D-aminoacyl-tRNA + H2O = a tRNA + a D-alpha-amino acid + H(+). Its function is as follows. An aminoacyl-tRNA editing enzyme that deacylates mischarged D-aminoacyl-tRNAs. Also deacylates mischarged glycyl-tRNA(Ala), protecting cells against glycine mischarging by AlaRS. Acts via tRNA-based rather than protein-based catalysis; rejects L-amino acids rather than detecting D-amino acids in the active site. By recycling D-aminoacyl-tRNA to D-amino acids and free tRNA molecules, this enzyme counteracts the toxicity associated with the formation of D-aminoacyl-tRNA entities in vivo and helps enforce protein L-homochirality. This Salmonella paratyphi A (strain AKU_12601) protein is D-aminoacyl-tRNA deacylase.